The sequence spans 865 residues: Nicotinate catabolism cluster-specific transcription factor (865 aa).

C2H2-type zinc fingers lie at residues 8–32 (HACT…SLNH) and 41–63 (YTCQ…LDRH). The segment at 74–168 (GKGVLETRKR…SIDDDGTDPD (95 aa)) is disordered. The Nuclear localization signal(NLS) signature appears at 77-87 (VLETRKRMRRA). Positions 78–89 (LETRKRMRRAED) are enriched in basic and acidic residues. Residues 96 to 105 (PPKRPSRHQQ) are compositionally biased toward basic residues. The span at 108-132 (GPPVGAPLSSSGSVSAGSGRSSRSP) shows a compositional bias: low complexity. The Nuclear export signal (NES) signature appears at 285–289 (LDIDL).

It localises to the nucleus. Functionally, transcription factor that specifically regulates the expression of the hxn gene cluster that mediates the degradation of nicotinate and related metabolites. This chain is Nicotinate catabolism cluster-specific transcription factor, found in Emericella nidulans (strain FGSC A4 / ATCC 38163 / CBS 112.46 / NRRL 194 / M139) (Aspergillus nidulans).